We begin with the raw amino-acid sequence, 88 residues long: Putative sulfur carrier protein AF_0554 (88 aa).

The active-site Cysteine persulfide intermediate is Cys26.

This sequence belongs to the sulfur carrier protein TusA family.

The polypeptide is Putative sulfur carrier protein AF_0554 (Archaeoglobus fulgidus (strain ATCC 49558 / DSM 4304 / JCM 9628 / NBRC 100126 / VC-16)).